Reading from the N-terminus, the 421-residue chain is Thymidine phosphorylase (421 aa).

The protein belongs to the thymidine/pyrimidine-nucleoside phosphorylase family. As to quaternary structure, homodimer.

It catalyses the reaction thymidine + phosphate = 2-deoxy-alpha-D-ribose 1-phosphate + thymine. Its function is as follows. The enzymes which catalyze the reversible phosphorolysis of pyrimidine nucleosides are involved in the degradation of these compounds and in their utilization as carbon and energy sources, or in the rescue of pyrimidine bases for nucleotide synthesis. The sequence is that of Thymidine phosphorylase (deoA) from Mycoplasma genitalium (strain ATCC 33530 / DSM 19775 / NCTC 10195 / G37) (Mycoplasmoides genitalium).